The following is a 191-amino-acid chain: Transposon Tn1546 resolvase (191 aa).

The Resolvase/invertase-type recombinase catalytic domain occupies 2 to 138; it reads RKIGYIRVSS…EGIELAKKEG (137 aa). S10 acts as the O-(5'-phospho-DNA)-serine intermediate in catalysis. A DNA-binding region (H-T-H motif) is located at residues 168–187; the sequence is VNQICEITNVSRASLYRKLS.

This sequence belongs to the site-specific recombinase resolvase family.

In terms of biological role, resolvase catalyzes the resolution (a site-specific recombination) of the cointegrated replicon to yield the final transposition products. This is Transposon Tn1546 resolvase from Enterococcus faecium (Streptococcus faecium).